Here is a 769-residue protein sequence, read N- to C-terminus: 5-methyltetrahydropteroyltriglutamate--homocysteine methyltransferase (769 aa).

5-methyltetrahydropteroyltri-L-glutamate is bound by residues 16 to 19 (RELK) and Lys-121. Positions 415 to 450 (SMTERDSPHSSRSPLQREALDLPTLPTTTIGSFPQT) are disordered. Residues 439–449 (LPTTTIGSFPQ) show a composition bias toward polar residues. L-homocysteine is bound by residues 444-446 (IGS) and Glu-497. L-methionine is bound by residues 444-446 (IGS) and Glu-497. 5-methyltetrahydropteroyltri-L-glutamate contacts are provided by residues 528 to 529 (RC) and Trp-574. Asp-612 provides a ligand contact to L-homocysteine. Asp-612 contributes to the L-methionine binding site. Glu-618 provides a ligand contact to 5-methyltetrahydropteroyltri-L-glutamate. The Zn(2+) site is built by His-654, Cys-656, and Glu-678. His-707 functions as the Proton donor in the catalytic mechanism. Cys-739 contributes to the Zn(2+) binding site.

Belongs to the vitamin-B12 independent methionine synthase family. The cofactor is Zn(2+).

The catalysed reaction is 5-methyltetrahydropteroyltri-L-glutamate + L-homocysteine = tetrahydropteroyltri-L-glutamate + L-methionine. Its pathway is amino-acid biosynthesis; L-methionine biosynthesis via de novo pathway; L-methionine from L-homocysteine (MetE route): step 1/1. Its function is as follows. Catalyzes the transfer of a methyl group from 5-methyltetrahydrofolate to homocysteine resulting in methionine formation. This chain is 5-methyltetrahydropteroyltriglutamate--homocysteine methyltransferase, found in Salinibacter ruber (strain DSM 13855 / M31).